The chain runs to 247 residues: ATP synthase subunit a (247 aa).

6 consecutive transmembrane segments (helical) span residues 23–43, 90–110, 116–136, 145–165, 194–214, and 215–235; these read ISFT…TLFL, LFMF…VIGF, VIVT…IGFA, MFFP…IELI, GFVV…FAFL, and SAIT…FTIL.

This sequence belongs to the ATPase A chain family. In terms of assembly, F-type ATPases have 2 components, CF(1) - the catalytic core - and CF(0) - the membrane proton channel. CF(1) has five subunits: alpha(3), beta(3), gamma(1), delta(1), epsilon(1). CF(0) has three main subunits: a(1), b(2) and c(9-12). The alpha and beta chains form an alternating ring which encloses part of the gamma chain. CF(1) is attached to CF(0) by a central stalk formed by the gamma and epsilon chains, while a peripheral stalk is formed by the delta and b chains.

The protein localises to the cell inner membrane. Its function is as follows. Key component of the proton channel; it plays a direct role in the translocation of protons across the membrane. In Paramagnetospirillum magneticum (strain ATCC 700264 / AMB-1) (Magnetospirillum magneticum), this protein is ATP synthase subunit a.